Here is a 957-residue protein sequence, read N- to C-terminus: Glycine dehydrogenase (decarboxylating) (957 aa).

Lys-708 carries the post-translational modification N6-(pyridoxal phosphate)lysine.

It belongs to the GcvP family. The glycine cleavage system is composed of four proteins: P, T, L and H. Requires pyridoxal 5'-phosphate as cofactor.

The catalysed reaction is N(6)-[(R)-lipoyl]-L-lysyl-[glycine-cleavage complex H protein] + glycine + H(+) = N(6)-[(R)-S(8)-aminomethyldihydrolipoyl]-L-lysyl-[glycine-cleavage complex H protein] + CO2. Functionally, the glycine cleavage system catalyzes the degradation of glycine. The P protein binds the alpha-amino group of glycine through its pyridoxal phosphate cofactor; CO(2) is released and the remaining methylamine moiety is then transferred to the lipoamide cofactor of the H protein. The chain is Glycine dehydrogenase (decarboxylating) from Salmonella heidelberg (strain SL476).